Consider the following 423-residue polypeptide: Adenylosuccinate synthetase (423 aa).

GTP is bound by residues 12 to 18 (GDEGKGK) and 40 to 42 (GHT). D13 functions as the Proton acceptor in the catalytic mechanism. Mg(2+) is bound by residues D13 and G40. Residues 13–16 (DEGK), 38–41 (NAGH), T129, R143, Q221, T236, and R300 contribute to the IMP site. H41 acts as the Proton donor in catalysis. 296–302 (AVTGRER) serves as a coordination point for substrate. Residues R302, 328–330 (KSD), and 408–410 (SVG) each bind GTP.

It belongs to the adenylosuccinate synthetase family. Homodimer. Mg(2+) is required as a cofactor.

The protein resides in the cytoplasm. The enzyme catalyses IMP + L-aspartate + GTP = N(6)-(1,2-dicarboxyethyl)-AMP + GDP + phosphate + 2 H(+). The protein operates within purine metabolism; AMP biosynthesis via de novo pathway; AMP from IMP: step 1/2. In terms of biological role, plays an important role in the de novo pathway of purine nucleotide biosynthesis. Catalyzes the first committed step in the biosynthesis of AMP from IMP. The protein is Adenylosuccinate synthetase of Phocaeicola vulgatus (strain ATCC 8482 / DSM 1447 / JCM 5826 / CCUG 4940 / NBRC 14291 / NCTC 11154) (Bacteroides vulgatus).